Reading from the N-terminus, the 723-residue chain is MGKKKSDESAATTKVKPSGKDASKDSKKEKLSVSAMLAGMDQKDDKPKKGSSSRTKAAPKSTSYTDGIDLPPSDEEDDGESDEEERQKEARRKLKSEQRHLEISVTDKEQKKREAKERLALQAAESAKREAMKDDHDAFTVVIGSKTSVLEGDDMADANVKDITIESFSVSARGKELLKNASVRISHGKRYGLIGPNGMGKSTLLKLLAWRKIPVPKNIDVLLVEQEVVGDEKSALNAVVSANEELVKLREEAEALQKSSSGADGENVDGEDDDDTGEKLAELYDRLQILGSDAAEAQASKILAGLGFTKDMQVRATQSFSGGWRMRISLARALFVQPTLLLLDEPTNHLDLRAVLWLEEYLCRWKKTLVVVSHDRDFLNTVCTEIIHLHDQNLHFYRGNFDGFESGYEQRRKEMNKKFDVYDKQMKAAKRTGNRGQQEKVKDRAKFTAAKEASKSKSKGKTVDEEGPAPEAPRKWRDYSVVFHFPEPTELTPPLLQLIEVSFSYPNRPDFRLSNVDVGIDMGTRVAIVGPNGAGKSTLLNLLAGDLVPTEGEMRRSQKLRIGRYSQHFVDLLTMGETPVQYLLRLHPDQEGFSKQEAVRAKLGKFGLPSHNHLSPIAKLSGGQKARVVFTSISMSKPHILLLDEPTNHLDMQSIDALADALDEFTGGVVLVSHDSRLISRVCAEEEKSQIWVVEDGTVNFFPGTFEEYKEDLQREIKAEVDE.

Residues 1-117 (MGKKKSDESA…KEQKKREAKE (117 aa)) are disordered. Residues 18–31 (SGKDASKDSKKEKL) are compositionally biased toward basic and acidic residues. Residues 50-65 (GSSSRTKAAPKSTSYT) are compositionally biased toward polar residues. The segment covering 72–84 (PSDEEDDGESDEE) has biased composition (acidic residues). Over residues 95 to 117 (KSEQRHLEISVTDKEQKKREAKE) the composition is skewed to basic and acidic residues. The ABC transporter 1 domain maps to 163 to 423 (ITIESFSVSA…EMNKKFDVYD (261 aa)). ATP is bound at residue 195 to 202 (GPNGMGKS). Disordered stretches follow at residues 256–275 (LQKSSSGADGENVDGEDDDD) and 427–472 (KAAK…APEA). Positions 266-275 (ENVDGEDDDD) are enriched in acidic residues. Basic and acidic residues predominate over residues 437-446 (QQEKVKDRAK). One can recognise an ABC transporter 2 domain in the interval 496–721 (LQLIEVSFSY…DLQREIKAEV (226 aa)). Position 530–537 (530–537 (GPNGAGKS)) interacts with ATP.

Belongs to the ABC transporter superfamily. ABCF family. EF3 (TC 3.A.1.121) subfamily.

This is ABC transporter F family member 4 (ABCF4) from Arabidopsis thaliana (Mouse-ear cress).